Here is a 565-residue protein sequence, read N- to C-terminus: uncharacterized protein (565 aa).

A signal peptide spans 1–21 (MKIPSQQVLLALPLLASPAQS). N-linked (GlcNAc...) asparagine glycans are attached at residues N46 and N88. An FAD-binding PCMH-type domain is found at 118–302 (QGIVPYYSVS…TSVTYKTHPK (185 aa)). Position 155 is a pros-8alpha-FAD histidine (H155). Residues N191, N314, N364, N371, and N484 are each glycosylated (N-linked (GlcNAc...) asparagine).

Belongs to the oxygen-dependent FAD-linked oxidoreductase family. FAD is required as a cofactor.

It localises to the secreted. This is an uncharacterized protein from Arthroderma benhamiae (strain ATCC MYA-4681 / CBS 112371) (Trichophyton mentagrophytes).